The sequence spans 609 residues: UvrABC system protein C (609 aa).

Residues 16 to 94 (SSAGVYRMYD…IKQYMPKYNV (79 aa)) enclose the GIY-YIG domain. The 36-residue stretch at 203–238 (QQVISALVDKMELAAERQAYEQAARFRDQIMALRKV) folds into the UVR domain.

Belongs to the UvrC family. In terms of assembly, interacts with UvrB in an incision complex.

It is found in the cytoplasm. Functionally, the UvrABC repair system catalyzes the recognition and processing of DNA lesions. UvrC both incises the 5' and 3' sides of the lesion. The N-terminal half is responsible for the 3' incision and the C-terminal half is responsible for the 5' incision. The protein is UvrABC system protein C of Shewanella baltica (strain OS195).